The chain runs to 307 residues: Pseudouridine-5'-phosphate glycosidase (307 aa).

The active-site Proton donor is the Glu28. Substrate contacts are provided by Lys89 and Val109. A Mn(2+)-binding site is contributed by Asp141. 143 to 145 (SAD) provides a ligand contact to substrate. Lys162 functions as the Nucleophile in the catalytic mechanism.

Belongs to the pseudouridine-5'-phosphate glycosidase family. As to quaternary structure, homotrimer. Requires Mn(2+) as cofactor.

The catalysed reaction is D-ribose 5-phosphate + uracil = psi-UMP + H2O. In terms of biological role, catalyzes the reversible cleavage of pseudouridine 5'-phosphate (PsiMP) to ribose 5-phosphate and uracil. Functions biologically in the cleavage direction, as part of a pseudouridine degradation pathway. The polypeptide is Pseudouridine-5'-phosphate glycosidase (Alkaliphilus metalliredigens (strain QYMF)).